The following is a 179-amino-acid chain: Ribulose bisphosphate carboxylase small subunit, chloroplastic 5 (179 aa).

Residues 1 to 58 constitute a chloroplast transit peptide; it reads MASSATMLSSVATAACAAPAQASMVAPFVGLKSASAFPVTQKTATGLSTLPSNGGRVQ.

This sequence belongs to the RuBisCO small chain family. As to quaternary structure, heterohexadecamer of 8 large and 8 small subunits.

The protein localises to the plastid. It is found in the chloroplast. RuBisCO catalyzes two reactions: the carboxylation of D-ribulose 1,5-bisphosphate, the primary event in carbon dioxide fixation, as well as the oxidative fragmentation of the pentose substrate. Both reactions occur simultaneously and in competition at the same active site. Although the small subunit is not catalytic it is essential for maximal activity. The protein is Ribulose bisphosphate carboxylase small subunit, chloroplastic 5 of Fritillaria agrestis (Stinkbells).